The sequence spans 182 residues: uncharacterized protein (182 aa).

An N-terminal signal peptide occupies residues 1–29 (MKKLLKKLVVLFLSSLVIIFNVWYFIICA). The chain crosses the membrane as a helical span at residues 152–174 (WNLYFWTAASYNAVIFVFVLVIV).

It is found in the membrane. This is an uncharacterized protein from Bacillus subtilis (strain 168).